Reading from the N-terminus, the 570-residue chain is MESLGLHTVTLSDGTTAYVQQAVKGEKLLEGQVIQLEDGTTAYIHQVTVQKEALSFEDGQPVQLEDGSMAYIHRTPREGYDPSTLEAVQLEDGSTAYIHHPVAVPSESTILAVQTEVGLEDLAAEDDEGFSADAVVALEQYASKVLHDSQIPRNGKGQQVGDRAFRCGYKGCGRLYTTAHHLKVHERAHTGDRPYRCDFPSCGKAFATGYGLKSHVRTHTGEKPYKCPEELCSKAFKTSGDLQKHVRTHTGERPFQCPFEGCGRSFTTSNIRKVHVRTHTGERPYTCPEPHCGRGFTSATNYKNHVRIHTGEKPYVCTVPGCGKRFTEYSSLYKHHVVHTHCKPYTCSTCGKTYRQTSTLAMHKRSAHGELEATEESEQALYEQQQLEAASAAEESPPPKRPRIAYLSEVKEERDDIPAQVAMVTEEDGAPQVALITQDGAQQVSLSPEDLQALGSAISMVTQHGSTTLTIPSPDADLATSGTHTVTMVSADGTQTQPVTIITSGAVVAEDSSVASLRHQQVALLATANGTHIAVQLEEQQTLEEAINVATAAMQQGAVTLETTVSESGC.

A Glycyl lysine isopeptide (Lys-Gly) (interchain with G-Cter in SUMO2) cross-link involves residue lysine 24. A run of 3 repeats spans residues 34–45 (IQLEDGTTAYIH), 62–73 (VQLEDGSMAYIH), and 88–99 (VQLEDGSTAYIH). A 3 X 12 AA approximate repeats region spans residues 34 to 99 (IQLEDGTTAY…LEDGSTAYIH (66 aa)). 7 C2H2-type zinc fingers span residues 165–189 (FRCG…ERAH), 195–219 (YRCD…VRTH), 225–249 (YKCP…VRTH), 255–279 (FQCP…VRTH), 285–309 (YTCP…VRIH), 315–339 (YVCT…HVVH), and 345–368 (YTCS…RSAH). The tract at residues 365–401 (RSAHGELEATEESEQALYEQQQLEAASAAEESPPPKR) is disordered. The span at 379–395 (QALYEQQQLEAASAAEE) shows a compositional bias: low complexity.

It belongs to the krueppel C2H2-type zinc-finger protein family. Testis.

The protein localises to the nucleus. May be involved in transcriptional regulation. In Homo sapiens (Human), this protein is Zinc finger protein 76 (ZNF76).